A 488-amino-acid chain; its full sequence is MTGEKIRSVRKERKSGLDLLEPDEEPAATGPAKHRGSKIFSGGNHRISRSSSSPGDPDGAYPVHECVFRGDVRRLSSLIRTQNIAQKDVHGNTPLHLAVMMGHKECAHLLLAHNAPVKVKNAQGWSPLAEAISYGDRQMITALLRKLKQQSRESVEDKRPRLLKALKELGDFYLELHWDFQSWVPLLSRILPSDACKIYKQGINIRLDTTLIDFTDMKCQRGDLSFIFCGDAPPSESFVVLDNEQKVYQRIHHEESEMETEEEVDILMSSDVYSATLSTKSITFSRAQTGWLFREDKTERVGNFLADFYMVNGLVLESRKRREHLSEEDILRNKAIMESFSKGGSLIEQNFEPMRRQSLTPPSPNTISWEEYITAETGKAPHLGRELVCKESKKNFKATVAMSPDFPLGIESLLNVLEVIAPFKHFNKLREFVQMKLPPGFPVKLDIPVFPTITATVTFQEFRYDEFDESIFTIPSDYKGDPSRFPDL.

A disordered region spans residues 1-60 (MTGEKIRSVRKERKSGLDLLEPDEEPAATGPAKHRGSKIFSGGNHRISRSSSSPGDPDGA). Over residues 41-59 (SGGNHRISRSSSSPGDPDG) the composition is skewed to low complexity. ANK repeat units lie at residues 58 to 87 (DGAY…IAQK), 90 to 119 (HGNT…PVKV), and 123 to 152 (QGWS…QQSR).

Its subcellular location is the endoplasmic reticulum membrane. Its function is as follows. Acts as a molecular chaperone for G protein-coupled receptors, regulating their biogenesis and exit from the ER. The protein is Ankyrin repeat domain-containing protein 13C (ankrd13c) of Danio rerio (Zebrafish).